We begin with the raw amino-acid sequence, 262 residues long: Aquaporin TIP3-1 (262 aa).

The next 2 membrane-spanning stretches (helical) occupy residues 27-47 (AAISEFIATAIFVFAAEGSVL) and 61-81 (GLVAVALAHALALAVAVAVAV). Residues 89–91 (NPA) carry the NPA 1 motif. The next 3 helical transmembrane spans lie at 104-124 (LVRAVLYWVAQLLGAVAATLL), 148-168 (AVLLEAVMTFGLMYAYYATVI), and 175-195 (VGTIAPLAVGFLLGANVLAGG). The NPA 2 signature appears at 203 to 205 (NPA). Residues 223-243 (YWLGPFLGAGLAGLVYEYLVI) form a helical membrane-spanning segment.

This sequence belongs to the MIP/aquaporin (TC 1.A.8) family. TIP (TC 1.A.8.10) subfamily.

The protein resides in the vacuole membrane. Functionally, aquaporins facilitate the transport of water and small neutral solutes across cell membranes. The chain is Aquaporin TIP3-1 (TIP3-1) from Zea mays (Maize).